We begin with the raw amino-acid sequence, 155 residues long: DNA-directed RNA polymerases I, II, and III subunit RPABC2 (155 aa).

Over residues Met-1–Asp-19 the composition is skewed to acidic residues. The interval Met-1 to Asp-57 is disordered. Over residues Val-20 to Glu-39 the composition is skewed to basic and acidic residues. Ser-24 bears the Phosphoserine mark. The tract at residues Leu-111–Leu-132 is leucine-zipper.

Belongs to the archaeal Rpo6/eukaryotic RPB6 RNA polymerase subunit family. In terms of assembly, component of the RNA polymerase I (Pol I), RNA polymerase II (Pol II) and RNA polymerase III (Pol III) complexes. Component of the RNA polymerase I (Pol I) complex consisting of 14 subunits: RPA135, RPA190, RPC40, RPA14, RPB5, RPO26, RPA43, RPB8, RPA12, RPB10, RPC19, RPC10, RPA49 and RPA34. The complex is composed of a horseshoe-shaped core containing ten subunits (RPA135, RPA190, RPB5, RPO26, RPB8, RPB10, RPC10, RPA12, RPC19 and RPC40) where RPA135 and RPA190 form the DNA-binding cleft. Outside of the core, RPA14 and RPA43 form the stalk that mediates interactions with transcription initiation factors and newly synthesized RNA. Component of the RNA polymerase II (Pol II) complex consisting of 12 subunits: RPO21, RPB2, RPB3, RPB4, RPB5, RPO26, RPB7, RPB8, RPB9, RPB10 and RPC10. Component of the RNA polymerase III (Pol III) complex consisting of 17 subunits.

It localises to the cytoplasm. The protein resides in the nucleus. In terms of biological role, DNA-dependent RNA polymerases catalyze the transcription of DNA into RNA using the four ribonucleoside triphosphates as substrates. Common component of RNA polymerases I, II and III which synthesize ribosomal RNA precursors, mRNA precursors and many functional non-coding RNAs, and small RNAs, such as 5S rRNA and tRNAs, respectively. Pol II is the central component of the basal RNA polymerase II transcription machinery. RNA polymerases are composed of mobile elements that move relative to each other. In Pol II, RPB6 is part of the clamp element and together with parts of RPB1 and RPB2 forms a pocket to which the RPB4-RPB7 subcomplex binds. This chain is DNA-directed RNA polymerases I, II, and III subunit RPABC2 (RPO26), found in Saccharomyces cerevisiae (strain ATCC 204508 / S288c) (Baker's yeast).